We begin with the raw amino-acid sequence, 353 residues long: Heat-inducible transcription repressor HrcA (353 aa).

This sequence belongs to the HrcA family.

Negative regulator of class I heat shock genes (grpE-dnaK-dnaJ and groELS operons). Prevents heat-shock induction of these operons. The polypeptide is Heat-inducible transcription repressor HrcA (Synechococcus elongatus (strain ATCC 33912 / PCC 7942 / FACHB-805) (Anacystis nidulans R2)).